The primary structure comprises 389 residues: Monomeric sarcosine oxidase (389 aa).

Residue 8–38 (DVIVVGAGSMGMAAGYYLSKQGVKTLLVDSF) participates in FAD binding. At C318 the chain carries S-8alpha-FAD cysteine.

This sequence belongs to the MSOX/MTOX family. MSOX subfamily. As to quaternary structure, monomer. FAD serves as cofactor.

The protein resides in the cytoplasm. The catalysed reaction is sarcosine + O2 + H2O = formaldehyde + glycine + H2O2. Its function is as follows. Catalyzes the oxidative demethylation of sarcosine. The chain is Monomeric sarcosine oxidase (soxA) from Arthrobacter sp. (strain TE1826).